The sequence spans 368 residues: Peptide chain release factor 2 (368 aa).

Q251 carries the post-translational modification N5-methylglutamine.

This sequence belongs to the prokaryotic/mitochondrial release factor family. In terms of processing, methylated by PrmC. Methylation increases the termination efficiency of RF2.

It is found in the cytoplasm. Its function is as follows. Peptide chain release factor 2 directs the termination of translation in response to the peptide chain termination codons UGA and UAA. This chain is Peptide chain release factor 2, found in Wolinella succinogenes (strain ATCC 29543 / DSM 1740 / CCUG 13145 / JCM 31913 / LMG 7466 / NCTC 11488 / FDC 602W) (Vibrio succinogenes).